Here is a 496-residue protein sequence, read N- to C-terminus: Cytochrome P450 71D180 (496 aa).

Residues 1 to 21 (MDISISWVVIIVFVLSYLILM) form a helical; Signal-anchor for type II membrane protein membrane-spanning segment. C435 is a heme binding site. The segment at 471–496 (MSETPGLSGPRKNPLIMIPTIHNPTS) is disordered.

It belongs to the cytochrome P450 family. Requires heme as cofactor. As to expression, mostly expressed in flowers and stems, and, to a lower extent, in leaves.

Its subcellular location is the membrane. The catalysed reaction is gamma-terpinene + 2 reduced [NADPH--hemoprotein reductase] + 2 O2 = carvacrol + 2 oxidized [NADPH--hemoprotein reductase] + 3 H2O + 2 H(+). The enzyme catalyses (4S)-limonene + reduced [NADPH--hemoprotein reductase] + O2 = (1S,5R)-carveol + oxidized [NADPH--hemoprotein reductase] + H2O + H(+). It carries out the reaction (4R)-limonene + reduced [NADPH--hemoprotein reductase] + O2 = (1R,5S)-carveol + oxidized [NADPH--hemoprotein reductase] + H2O + H(+). Its pathway is secondary metabolite biosynthesis; terpenoid biosynthesis. Involved in the biosynthesis of phenolic monoterpenes natural products thymol and carvacrol which have a broad range of biological activities acting as antimicrobial compounds, insecticides, antioxidants and pharmaceutical agents. Catalyzes the C2-hydroxylation of gamma-terpinene to produce carvacrol. Also mediates the C6-hydroxylation of (4S)-limonene and (4R)-limonene to form carveol. The sequence is that of Cytochrome P450 71D180 from Origanum vulgare (Wild marjoram).